A 274-amino-acid chain; its full sequence is NAD(P)H-quinone oxidoreductase subunit K, chloroplastic (274 aa).

Polar residues-rich tracts occupy residues 1–10 (MVINQKNLSS) and 18–27 (SGSQSSTKAD). The tract at residues 1 to 27 (MVINQKNLSSPVAPYDKSGSQSSTKAD) is disordered. [4Fe-4S] cluster is bound by residues Cys-90, Cys-91, Cys-155, and Cys-186.

The protein belongs to the complex I 20 kDa subunit family. NDH is composed of at least 16 different subunits, 5 of which are encoded in the nucleus. The cofactor is [4Fe-4S] cluster.

It localises to the plastid. Its subcellular location is the chloroplast thylakoid membrane. The enzyme catalyses a plastoquinone + NADH + (n+1) H(+)(in) = a plastoquinol + NAD(+) + n H(+)(out). The catalysed reaction is a plastoquinone + NADPH + (n+1) H(+)(in) = a plastoquinol + NADP(+) + n H(+)(out). In terms of biological role, NDH shuttles electrons from NAD(P)H:plastoquinone, via FMN and iron-sulfur (Fe-S) centers, to quinones in the photosynthetic chain and possibly in a chloroplast respiratory chain. The immediate electron acceptor for the enzyme in this species is believed to be plastoquinone. Couples the redox reaction to proton translocation, and thus conserves the redox energy in a proton gradient. The sequence is that of NAD(P)H-quinone oxidoreductase subunit K, chloroplastic from Chlorokybus atmophyticus (Soil alga).